Reading from the N-terminus, the 253-residue chain is Ribonuclease 3 (253 aa).

The 129-residue stretch at 29 to 157 folds into the RNase III domain; sequence VDELQKTIGH…MLGAVFLDAG (129 aa). Position 70 (glutamate 70) interacts with Mg(2+). Residue aspartate 74 is part of the active site. Mg(2+) is bound by residues aspartate 143 and glutamate 146. Glutamate 146 is a catalytic residue. Residues 184 to 253 form the DRBM domain; the sequence is DYKSQLQELT…AARAVATLDK (70 aa).

This sequence belongs to the ribonuclease III family. Homodimer. It depends on Mg(2+) as a cofactor.

The protein resides in the cytoplasm. It catalyses the reaction Endonucleolytic cleavage to 5'-phosphomonoester.. Its function is as follows. Digests double-stranded RNA. Involved in the processing of primary rRNA transcript to yield the immediate precursors to the large and small rRNAs (23S and 16S). Processes some mRNAs, and tRNAs when they are encoded in the rRNA operon. Processes pre-crRNA and tracrRNA of type II CRISPR loci if present in the organism. In Nitratidesulfovibrio vulgaris (strain ATCC 29579 / DSM 644 / CCUG 34227 / NCIMB 8303 / VKM B-1760 / Hildenborough) (Desulfovibrio vulgaris), this protein is Ribonuclease 3.